A 153-amino-acid polypeptide reads, in one-letter code: Histone H2A.Z-specific chaperone CHZ1 (153 aa).

A compositionally biased stretch (basic and acidic residues) spans 1–29 (MSDEAKEKRELESQKESSHNKSEKSVEPK). A disordered region spans residues 1–153 (MSDEAKEKRE…EDEEDDDFKE (153 aa)). The residue at position 2 (Ser2) is an N-acetylserine. The segment covering 56–65 (LTKSENNGTV) has biased composition (polar residues). Residues Ser68 and Ser70 each carry the phosphoserine modification. Residues 84–94 (EGEEEEDDLAE) are compositionally biased toward acidic residues. Residues 87-108 (EEEDDLAEIDTSNIITSGRRTR) are important for H2A.Z-H2B binding. Residues 110-138 (KVIDYKKTAEELDKKEPSTGSKDDVGYGE) are compositionally biased toward basic and acidic residues. Positions 139–153 (KEEDDEDEEDDDFKE) are enriched in acidic residues.

This sequence belongs to the CHZ1 family. As to quaternary structure, forms a heterotrimer with H2A.Z-H2B, stabilizing the association of the histone dimer. Also, with a lower affinity, forms a heterotrimer with H2A-H2B.

It localises to the nucleus. In terms of biological role, forms a chaperone-bound H2A.Z-H2B complex that acts as a source for SWR1 complex-dependent H2A to H2A.Z histone replacement in chromatin. The chain is Histone H2A.Z-specific chaperone CHZ1 (CHZ1) from Saccharomyces cerevisiae (strain ATCC 204508 / S288c) (Baker's yeast).